Here is a 292-residue protein sequence, read N- to C-terminus: DSC E3 ubiquitin ligase complex subunit 3 (292 aa).

The Extracellular segment spans residues 1–243 (MSAEPLLPTH…PIANIKHNKD (243 aa)). N-linked (GlcNAc...) asparagine glycans are attached at residues Asn-11, Asn-41, Asn-77, Asn-99, and Asn-145. A helical membrane pass occupies residues 244–264 (LLLGICVGFFFGVFGILLMKF). Residues 265-273 (DGLFNRRQK) are Cytoplasmic-facing. Residues 274–291 (MAIFAGVIVNVMFCLVRG) form a helical membrane-spanning segment. Residue Phe-292 is a topological domain, extracellular.

The protein belongs to the dsc3 family. In terms of assembly, component of the DSC E3 ligase complexes composed of at least TUL1, DSC2, DSC3, UBX3, CDC48 as well as VLD1 for the vacuole-localized complex or GLD1 for the Golgi/endosome-localized complex.

The protein resides in the endoplasmic reticulum membrane. Component of the DSC E3 ubiquitin ligase complexes that tag proteins present in Golgi, endosome and vacuole membranes and function in protein homeostasis under non-stress conditions and support a role in protein quality control. Involved in endocytic protein trafficking. The protein is DSC E3 ubiquitin ligase complex subunit 3 of Saccharomyces cerevisiae (strain ATCC 204508 / S288c) (Baker's yeast).